Here is a 91-residue protein sequence, read N- to C-terminus: MANLGFPELVLIAVVILVLFGWKKLPDAARSVGRSMRIFKSEVSEMKNDGAEAEKTSAASTKTDEITSVSSTDTPQPTVTVESKDEKKHPA.

A helical transmembrane segment spans residues 2-22 (ANLGFPELVLIAVVILVLFGW). Over residues 43–55 (VSEMKNDGAEAEK) the composition is skewed to basic and acidic residues. The disordered stretch occupies residues 43–91 (VSEMKNDGAEAEKTSAASTKTDEITSVSSTDTPQPTVTVESKDEKKHPA). A compositionally biased stretch (polar residues) spans 57-81 (SAASTKTDEITSVSSTDTPQPTVTV). The segment covering 82–91 (ESKDEKKHPA) has biased composition (basic and acidic residues).

It belongs to the TatA/E family. The Tat system comprises two distinct complexes: a TatABC complex, containing multiple copies of TatA, TatB and TatC subunits, and a separate TatA complex, containing only TatA subunits. Substrates initially bind to the TatABC complex, which probably triggers association of the separate TatA complex to form the active translocon.

The protein localises to the cell membrane. Functionally, part of the twin-arginine translocation (Tat) system that transports large folded proteins containing a characteristic twin-arginine motif in their signal peptide across membranes. TatA could form the protein-conducting channel of the Tat system. This is Sec-independent protein translocase protein TatA from Corynebacterium kroppenstedtii (strain DSM 44385 / JCM 11950 / CIP 105744 / CCUG 35717).